A 131-amino-acid chain; its full sequence is Profilin-2 (131 aa).

Residues Cys-13 and Cys-115 are joined by a disulfide bond. The short motif at 81–97 (AVIRGKKGSGGITVKKT) is the Involved in PIP2 interaction element. Thr-111 bears the Phosphothreonine mark.

Belongs to the profilin family. Occurs in many kinds of cells as a complex with monomeric actin in a 1:1 ratio. Post-translationally, phosphorylated by MAP kinases. As to expression, pollen specific.

It is found in the cytoplasm. It localises to the cytoskeleton. Functionally, binds to actin and affects the structure of the cytoskeleton. At high concentrations, profilin prevents the polymerization of actin, whereas it enhances it at low concentrations. By binding to PIP2, it inhibits the formation of IP3 and DG. The sequence is that of Profilin-2 (PRO2) from Zea mays (Maize).